We begin with the raw amino-acid sequence, 219 residues long: Ran-binding protein 1 homolog c (219 aa).

Residues 1 to 11 (MASTEPERENR) are compositionally biased toward basic and acidic residues. 2 disordered regions span residues 1–30 (MAST…VAPI) and 160–219 (QVGK…EAST). Positions 12–23 (EDETEVNEDEDT) are enriched in acidic residues. Residues 26–161 (QVAPIVRLEE…FTEIAESQQV (136 aa)) enclose the RanBD1 domain. The span at 185–219 (SEEKAKEAEEKEPAKEDKETKKEKVEEEKKTEAST) shows a compositional bias: basic and acidic residues.

Its subcellular location is the nucleus. The protein resides in the nuclear pore complex. This chain is Ran-binding protein 1 homolog c (RANBP1C), found in Arabidopsis thaliana (Mouse-ear cress).